The sequence spans 323 residues: UDP-N-acetylenolpyruvoylglucosamine reductase (323 aa).

Residues 33–214 (IGGPAEALFC…LSAVFTLTHG (182 aa)) enclose the FAD-binding PCMH-type domain. Serine 243 functions as the Proton donor in the catalytic mechanism. The active site involves glutamate 315.

Belongs to the MurB family. FAD is required as a cofactor.

Its subcellular location is the cytoplasm. It catalyses the reaction UDP-N-acetyl-alpha-D-muramate + NADP(+) = UDP-N-acetyl-3-O-(1-carboxyvinyl)-alpha-D-glucosamine + NADPH + H(+). Its pathway is cell wall biogenesis; peptidoglycan biosynthesis. Its function is as follows. Cell wall formation. The protein is UDP-N-acetylenolpyruvoylglucosamine reductase of Treponema denticola (strain ATCC 35405 / DSM 14222 / CIP 103919 / JCM 8153 / KCTC 15104).